We begin with the raw amino-acid sequence, 84 residues long: MNKEEIIKEFQIHEGDTGSTEVQIALLTARIKHLTEHLKKHPKDYHSRRGLMKLVGRRRKILKYLRNKDPESYKNVIQKLGLRK.

The protein belongs to the universal ribosomal protein uS15 family. In terms of assembly, part of the 30S ribosomal subunit. Forms a bridge to the 50S subunit in the 70S ribosome, contacting the 23S rRNA.

Functionally, one of the primary rRNA binding proteins, it binds directly to 16S rRNA where it helps nucleate assembly of the platform of the 30S subunit by binding and bridging several RNA helices of the 16S rRNA. In terms of biological role, forms an intersubunit bridge (bridge B4) with the 23S rRNA of the 50S subunit in the ribosome. The polypeptide is Small ribosomal subunit protein uS15 (Thermosipho africanus (strain TCF52B)).